Reading from the N-terminus, the 1226-residue chain is Polyamine-transporting ATPase 13A3 (1226 aa).

The Cytoplasmic segment spans residues 1–28 (MDKEERKIINQGQEDEMEIYGYNLSRWK). The stretch at 29 to 49 (LAIVSLGVICTGGFLLLLLYW) is an intramembrane region. The Cytoplasmic segment spans residues 50-205 (MPEWRVKATC…IAVKVPSVFK (156 aa)). Serine 98 carries the post-translational modification Phosphoserine. The chain crosses the membrane as a helical span at residues 206-226 (LLIKEVLNPFYIFQLFSVILW). The Lumenal segment spans residues 227 to 232 (STDEYY). A helical membrane pass occupies residues 233 to 253 (YYALAIVVMSIVSIVSSLYSI). Over 254–409 (RKQYVMLHDM…KPTDFKLYRD (156 aa)) the chain is Cytoplasmic. A helical transmembrane segment spans residues 410–430 (AYLFLLCLVAVAGIGFIYTII). Residues 431–448 (NSILNEVQVGVIIIESLD) lie on the Lumenal side of the membrane. The helical transmembrane segment at 449–469 (IITITVPPALPAAMTAGIVYA) threads the bilayer. The Cytoplasmic portion of the chain corresponds to 470–940 (QRRLKKIGIF…ALITSFCVFK (471 aa)). The active-site 4-aspartylphosphate intermediate is the aspartate 498. 2 residues coordinate Mg(2+): aspartate 498 and threonine 500. Residues 498-500 (DKT), phenylalanine 628, arginine 684, and aspartate 750 each bind ATP. Serine 817 carries the post-translational modification Phosphoserine. Position 883 (aspartate 883) interacts with Mg(2+). 883–887 (DGAND) lines the ATP pocket. A helical transmembrane segment spans residues 941-961 (FMALYSIIQYFSVTLLYSILS). Residue asparagine 962 is a topological domain, lumenal. A helical transmembrane segment spans residues 963-983 (LGDFQFLFIDLAIILVVVFTM). The Cytoplasmic segment spans residues 984–999 (SLNPAWKELVAQRPPS). The helical transmembrane segment at 1000 to 1020 (GLISGALLFSVLSQIIICIGF) threads the bilayer. The Lumenal segment spans residues 1021–1073 (QSLGFFWVKQQPWYEVWHPKSDACNATGSLLWNSSHLDNETELDEHNIQNYEN). Residues 1074–1094 (TTVFFISSFQYLIVAIAFSKG) form a helical membrane-spanning segment. The Cytoplasmic segment spans residues 1095–1105 (KPFRQPCYKNY). Residues 1106-1126 (FFVFSVIFLYVFILFIMLYPV) traverse the membrane as a helical segment. Residues 1127 to 1143 (ASVDQVLQIVCVPYQWR) lie on the Lumenal side of the membrane. The helical transmembrane segment at 1144-1164 (VTMLIIVLVNAFVSITVEESV) threads the bilayer. Over 1165–1226 (DRWRKCCLPW…NGSCQIITIT (62 aa)) the chain is Cytoplasmic.

It belongs to the cation transport ATPase (P-type) (TC 3.A.3) family. Type V subfamily.

It localises to the recycling endosome membrane. Its subcellular location is the early endosome membrane. It is found in the late endosome membrane. The enzyme catalyses putrescine(out) + ATP + H2O = putrescine(in) + ADP + phosphate + H(+). ATP-driven pump involved in endocytosis-dependent polyamine transport. Uses ATP as an energy source to transfer polyamine precursor putrescine from the endosomal compartment to the cytosol. This chain is Polyamine-transporting ATPase 13A3 (ATP13A3), found in Macaca fascicularis (Crab-eating macaque).